A 94-amino-acid polypeptide reads, in one-letter code: Pyrimidine/purine nucleoside phosphorylase (94 aa).

Belongs to the nucleoside phosphorylase PpnP family.

It catalyses the reaction a purine D-ribonucleoside + phosphate = a purine nucleobase + alpha-D-ribose 1-phosphate. It carries out the reaction adenosine + phosphate = alpha-D-ribose 1-phosphate + adenine. The catalysed reaction is cytidine + phosphate = cytosine + alpha-D-ribose 1-phosphate. The enzyme catalyses guanosine + phosphate = alpha-D-ribose 1-phosphate + guanine. It catalyses the reaction inosine + phosphate = alpha-D-ribose 1-phosphate + hypoxanthine. It carries out the reaction thymidine + phosphate = 2-deoxy-alpha-D-ribose 1-phosphate + thymine. The catalysed reaction is uridine + phosphate = alpha-D-ribose 1-phosphate + uracil. The enzyme catalyses xanthosine + phosphate = alpha-D-ribose 1-phosphate + xanthine. Its function is as follows. Catalyzes the phosphorolysis of diverse nucleosides, yielding D-ribose 1-phosphate and the respective free bases. Can use uridine, adenosine, guanosine, cytidine, thymidine, inosine and xanthosine as substrates. Also catalyzes the reverse reactions. This is Pyrimidine/purine nucleoside phosphorylase from Pseudomonas putida (strain GB-1).